Reading from the N-terminus, the 161-residue chain is Putative defense protein 2 (161 aa).

The N-terminal stretch at 1 to 11 (LSWSALALTSA) is a signal peptide. The 150-residue stretch at 12 to 161 (YPTGAPTSAC…SAPVKILSHH (150 aa)) folds into the Reelin domain. The cysteines at positions 21 and 98 are disulfide-linked. N-linked (GlcNAc...) asparagine glycosylation occurs at Asn-91.

The protein belongs to the insect defense protein family.

The protein localises to the secreted. Its function is as follows. May have antimicrobial activity. The chain is Putative defense protein 2 from Antheraea mylitta (Tasar silkworm).